The sequence spans 227 residues: YEATS domain-containing protein 4 (227 aa).

Positions 15–158 (RVKGVTIVKP…AMMQQLLTTS (144 aa)) constitute a YEATS domain. Lys-37 is covalently cross-linked (Glycyl lysine isopeptide (Lys-Gly) (interchain with G-Cter in SUMO2)). The segment at 93-97 (WGEFE) is diacetylated histone H3 binding. The interval 163–227 (LGAYKHETEF…LEEDDQAKDI (65 aa)) is interaction with MLLT10. The interval 168–227 (HETEFAELEVKTREKLEAAKKKTSFEIAELKERLKASRETINCLKNEIRKLEEDDQAKDI) is interaction with TACC1. The stretch at 178 to 226 (KTREKLEAAKKKTSFEIAELKERLKASRETINCLKNEIRKLEEDDQAKD) forms a coiled coil.

In terms of assembly, component of numerous complexes with chromatin remodeling and histone acetyltransferase activity. Component of the NuA4 histone acetyltransferase complex which contains the catalytic subunit KAT5/TIP60 and the subunits EP400, TRRAP/PAF400, BRD8/SMAP, EPC1, DMAP1/DNMAP1, RUVBL1/TIP49, RUVBL2, ING3, actin, ACTL6A/BAF53A, MORF4L1/MRG15, MORF4L2/MRGX, MRGBP, YEATS4/GAS41, VPS72/YL1 and MEAF6. The NuA4 complex interacts with MYC and the adenovirus E1A protein. Component of a NuA4-related complex which contains EP400, TRRAP/PAF400, SRCAP, BRD8/SMAP, EPC1, DMAP1/DNMAP1, RUVBL1/TIP49, RUVBL2, actin, ACTL6A/BAF53A, VPS72 and YEATS4/GAS41. Interacts with MLLT10/AF10. Also interacts with the SWI/SNF component SMARCB1/BAF47, TACC1 and TACC2, and the nuclear matrix protein NUMA1. In terms of tissue distribution, expressed in brain, heart, kidney, liver, lung, pancreas, placenta and skeletal muscle.

It localises to the nucleus. Functionally, chromatin reader component of the NuA4 histone acetyltransferase (HAT) complex, a complex involved in transcriptional activation of select genes principally by acetylation of nucleosomal histones H4 and H2A. Specifically recognizes and binds acylated histone H3, with a preference for histone H3 diacetylated at 'Lys-18' and 'Lys-27' (H3K18ac and H3K27ac) or histone H3 diacetylated at 'Lys-14' and 'Lys-27' (H3K14ac and H3K27ac). Also able to recognize and bind crotonylated histone H3. May also recognize and bind histone H3 succinylated at 'Lys-122' (H3K122succ); additional evidences are however required to confirm this result in vivo. Plays a key role in histone variant H2AZ1/H2A.Z deposition into specific chromatin regions: recognizes and binds H3K14ac and H3K27ac on the promoters of actively transcribed genes and recruits NuA4-related complex to deposit H2AZ1/H2A.Z. H2AZ1/H2A.Z deposition is required for maintenance of embryonic stem cell. The protein is YEATS domain-containing protein 4 of Homo sapiens (Human).